The chain runs to 566 residues: Acyl-CoA synthetase ALT10 (566 aa).

196–207 provides a ligand contact to AMP; the sequence is MLFTSGTTGAPK. The segment at 473–551 is AMP-binding; the sequence is EVEHAALSHE…DAVHYNRTGK (79 aa).

Belongs to the ATP-dependent AMP-binding enzyme family.

The protein operates within mycotoxin biosynthesis. Acyl-CoA synthetase; part of the gene cluster that mediates the biosynthesis of the host-selective toxins (HSTs) AAL-toxins, sphinganine-analog mycotoxins responsible for Alternaria stem canker on tomato by the tomato pathotype. The biosynthesis starts with the polyketide synthase ALT1-catalyzed C-16 carbon chain assembly from one starter acetyl-CoA unit with malonyl-CoA extender units. ALT1 also selectively transfers methyl groups at the first and the third cycle of chain elongation for AAL toxin. The C-16 polyketide chain is released from the enzyme by a nucleophilic attack of a carbanion, which is derived from R-carbon of glycin by decarboxylation, on the carbonyl carbon of polyketide acyl chain. This step is probably catalyzed by a pyridoxal 5'-phosphate-dependent aminoacyl transferase ALT4. The respective functions of the other enzymes encoded by the cluster have still to be elucidated. The sphingosine N-acyltransferase-like protein ALT7 seems not to act as a resistance/self-tolerance factor against the toxin in the toxin biosynthetic gene cluster, contrary to what is expected. In Alternaria alternata (Alternaria rot fungus), this protein is Acyl-CoA synthetase ALT10.